Here is a 276-residue protein sequence, read N- to C-terminus: Neuroendocrine protein 7B2 (276 aa).

A disulfide bridge connects residues Cys-155 and Cys-168.

Belongs to the 7B2 family. As to quaternary structure, interacts with amon/PC2 early in the secretory pathway. Dissociation occurs at later stages.

The protein localises to the secreted. Its function is as follows. Acts as a molecular chaperone for neuroendocrine convertase amon/PC2, preventing its premature activation in the regulated secretory pathway. Binds to inactive amon in the endoplasmic reticulum and facilitates its transport from there to later compartments of the secretory pathway where it is proteolytically matured and activated. Also required for cleavage of amon. The protein is Neuroendocrine protein 7B2 of Drosophila melanogaster (Fruit fly).